The primary structure comprises 317 residues: Prenyl transferase paxC (317 aa).

K53 and H86 together coordinate substrate. Mg(2+) is bound by residues D93 and D97. Substrate is bound by residues R102, K186, T187, Q216, N223, and K233.

The protein belongs to the FPP/GGPP synthase family.

It functions in the pathway secondary metabolite biosynthesis. Prenyl transferase; part of the gene cluster that mediates the biosynthesis of paxalline, a mycotoxin that acts as an inhibitor of mammalian maxi-K channels. PaxG, the geranylgeranyl diphosphate (GGPP) synthase is proposed to catalyze the first step in paxilline biosynthesis. Condensation of indole-3-glycerol phosphate with GGPP by paxC then forms 3-geranylgeranylindole (3-GGI), followed by epoxidation and cyclization of this intermediate (by paxM and paxB) to form paspaline. Paspaline is subsequently converted to 13-desoxypaxilline by paxP, the latter being then converted to paxilline by paxQ. Finally paxilline can be mono- and di-prenylated by paxD. The polypeptide is Prenyl transferase paxC (Penicillium paxilli).